A 474-amino-acid chain; its full sequence is Equilibrative nucleoside transporter 3 (474 aa).

Over Met-1–Thr-53 the chain is Cytoplasmic. Ser-21 and Ser-23 each carry phosphoserine. Residues Leu-31–Leu-32 carry the Dileucine internalization motif motif. The helical transmembrane segment at Tyr-54–Ala-74 threads the bilayer. Topologically, residues Gln-75–Ser-105 are extracellular. The N-linked (GlcNAc...) asparagine glycan is linked to Asn-84. Residues Tyr-106–Val-126 traverse the membrane as a helical segment. The Cytoplasmic portion of the chain corresponds to Asn-127–Arg-134. A helical transmembrane segment spans residues Val-135–Val-155. Residues Asp-156–Thr-161 are Extracellular-facing. The helical transmembrane segment at His-162–Phe-182 threads the bilayer. At Asn-183–Leu-201 the chain is on the cytoplasmic side. The chain crosses the membrane as a helical span at residues Ile-202–Val-222. The Extracellular segment spans residues Ala-223–Thr-230. Residues Leu-231–Leu-251 traverse the membrane as a helical segment. Topologically, residues Pro-252–Thr-305 are cytoplasmic. Residues Glu-272–Thr-294 are disordered. Polar residues predominate over residues Pro-276–Pro-292. A helical membrane pass occupies residues Gly-306 to Cys-326. Over Thr-327–Pro-339 the chain is Extracellular. The helical transmembrane segment at Trp-340–Ala-357 threads the bilayer. Over Asp-358 to Lys-376 the chain is Cytoplasmic. A helical transmembrane segment spans residues Ala-377–Tyr-397. Residues Gln-398–Pro-414 lie on the Extracellular side of the membrane. A helical transmembrane segment spans residues Val-415–Tyr-435. The Cytoplasmic portion of the chain corresponds to Gly-436–Thr-453. A helical membrane pass occupies residues Phe-454 to Ile-474.

The protein belongs to the SLC29A/ENT transporter (TC 2.A.57) family.

The protein localises to the lysosome membrane. It is found in the late endosome membrane. It localises to the mitochondrion membrane. Its subcellular location is the cell membrane. The enzyme catalyses adenosine(in) = adenosine(out). It carries out the reaction guanosine(in) = guanosine(out). It catalyses the reaction inosine(in) = inosine(out). The catalysed reaction is uridine(out) = uridine(in). The enzyme catalyses cytidine(in) = cytidine(out). It carries out the reaction thymidine(in) = thymidine(out). It catalyses the reaction 2'-deoxyadenosine(in) = 2'-deoxyadenosine(out). The catalysed reaction is 2'-deoxycytidine(in) = 2'-deoxycytidine(out). The enzyme catalyses guanine(out) = guanine(in). It carries out the reaction uracil(in) = uracil(out). It catalyses the reaction (R)-noradrenaline(out) = (R)-noradrenaline(in). The catalysed reaction is dopamine(out) = dopamine(in). The enzyme catalyses serotonin(out) = serotonin(in). It carries out the reaction tyramine(in) = tyramine(out). It catalyses the reaction ATP(in) = ATP(out). In terms of biological role, uniporter that mediates the facilitative transport of nucleoside across lysosomal and mitochondrial membranes. Functions as a non-electrogenic Na(+)-independent transporter. Substrate transport is pH-dependent and enhanced under acidic condition, probably reflecting the location of the transporter in acidic intracellular compartments. Proton is not a cotransporting ion but most likely change the ionization state of the transporter which dictates transport-permissible/impermissible conformation for nucleoside translocation. May direct the nucleoside transport from lysosomes to cytosol or cytosol to mitochondria to facilitate the fundamental function of salvage synthesis of nucleic acids. Involved in the transport of nucleosides (adenosine, guanosine, uridine, thymidine, cytidine and inosine) and deoxynucleosides (deoxyadenosine, deoxycytidine). Also mediates transport of purine nucleobases (adenine, guanine) and pyrimidine nucleobases (uracil). Also able to transport monoamine neurotransmitters dopamine, serotonin, noradrenaline and tyramine. Capable of transporting ATP. Mediates nucleoside export from lysosomes in macrophages, which regulates macrophage functions and numbers. In Bos taurus (Bovine), this protein is Equilibrative nucleoside transporter 3 (SLC29A3).